Here is a 224-residue protein sequence, read N- to C-terminus: Ribose-5-phosphate isomerase A (224 aa).

Residues 26–29 (TGST), 81–84 (DGAD), and 94–97 (KGGG) contribute to the substrate site. The active-site Proton acceptor is the glutamate 103. Lysine 121 contacts substrate.

The protein belongs to the ribose 5-phosphate isomerase family. As to quaternary structure, homodimer.

It carries out the reaction aldehydo-D-ribose 5-phosphate = D-ribulose 5-phosphate. The protein operates within carbohydrate degradation; pentose phosphate pathway; D-ribose 5-phosphate from D-ribulose 5-phosphate (non-oxidative stage): step 1/1. Catalyzes the reversible conversion of ribose-5-phosphate to ribulose 5-phosphate. This Listeria innocua serovar 6a (strain ATCC BAA-680 / CLIP 11262) protein is Ribose-5-phosphate isomerase A.